Reading from the N-terminus, the 1160-residue chain is Protein translocase subunit SecA (1160 aa).

ATP is bound by residues Q162 and 180–184; that span reads GEGKT. Positions 342–362 are disordered; the sequence is LLEEKEEAEEEGDSRRAQELE. The segment covering 344 to 353 has biased composition (acidic residues); the sequence is EEKEEAEEEG. D726 contributes to the ATP binding site. Positions 1060-1134 are disordered; sequence EVQTEGQGPR…RNEYVTVRNN (75 aa). Polar residues predominate over residues 1074-1083; the sequence is QRNAQTQHDS. Over residues 1104–1115 the composition is skewed to basic and acidic residues; the sequence is AAERDPTVEEKQ.

Belongs to the SecA family. Monomer and homodimer. Part of the essential Sec protein translocation apparatus which comprises SecA, SecYEG and auxiliary proteins SecDF. Other proteins may also be involved.

It is found in the cell inner membrane. The protein localises to the cytoplasm. The catalysed reaction is ATP + H2O + cellular proteinSide 1 = ADP + phosphate + cellular proteinSide 2.. Its function is as follows. Part of the Sec protein translocase complex. Interacts with the SecYEG preprotein conducting channel. Has a central role in coupling the hydrolysis of ATP to the transfer of proteins into and across the cell membrane, serving as an ATP-driven molecular motor driving the stepwise translocation of polypeptide chains across the membrane. The polypeptide is Protein translocase subunit SecA (Salinibacter ruber (strain DSM 13855 / M31)).